Here is a 214-residue protein sequence, read N- to C-terminus: SH3 domain-binding glutamic acid-rich protein (214 aa).

The short motif at 61 to 67 (NGIPLPP) is the SH3-binding element. Residues 101 to 214 (PGSKVTKSEE…EEEAGEGEDS (114 aa)) are disordered. Basic and acidic residues predominate over residues 129 to 144 (GTEKAEKSGENEAQKE). Acidic residues-rich tracts occupy residues 162–192 (EGED…EAPE) and 198–214 (EAEE…GEDS).

It belongs to the SH3BGR family.

The protein is SH3 domain-binding glutamic acid-rich protein (Sh3bgr) of Mus musculus (Mouse).